The following is a 337-amino-acid chain: Biotin synthase (337 aa).

The region spanning 58–288 (AGSELLHACS…AHPHKIIKFA (231 aa)) is the Radical SAM core domain. The [4Fe-4S] cluster site is built by Cys76, Cys80, and Cys83. Residues Cys155, Cys216, and Lys286 each contribute to the [2Fe-2S] cluster site.

The protein belongs to the radical SAM superfamily. Biotin synthase family. As to quaternary structure, homodimer. The cofactor is [4Fe-4S] cluster. Requires [2Fe-2S] cluster as cofactor.

It catalyses the reaction (4R,5S)-dethiobiotin + (sulfur carrier)-SH + 2 reduced [2Fe-2S]-[ferredoxin] + 2 S-adenosyl-L-methionine = (sulfur carrier)-H + biotin + 2 5'-deoxyadenosine + 2 L-methionine + 2 oxidized [2Fe-2S]-[ferredoxin]. It participates in cofactor biosynthesis; biotin biosynthesis; biotin from 7,8-diaminononanoate: step 2/2. Catalyzes the conversion of dethiobiotin (DTB) to biotin by the insertion of a sulfur atom into dethiobiotin via a radical-based mechanism. This Pelodictyon phaeoclathratiforme (strain DSM 5477 / BU-1) protein is Biotin synthase.